The sequence spans 185 residues: MGQQVLKFSNEKMEKAVAAYSRELATVRAGRASASVLDKVQVDYYGAPTPVVQLANITVPEARLLVIQPYDKTSIGDIEKAILKADLGLNPSNDGTVIRIAFPALTEERRRDLVKVVKKYAEEAKVAVRNVRRDGNDDLKKLEKAGEITEDDLRGYTEDIQKETDKYIAKVDEIAKNKEKEIMEV.

Belongs to the RRF family.

It localises to the cytoplasm. In terms of biological role, responsible for the release of ribosomes from messenger RNA at the termination of protein biosynthesis. May increase the efficiency of translation by recycling ribosomes from one round of translation to another. In Bacillus anthracis (strain A0248), this protein is Ribosome-recycling factor.